A 420-amino-acid chain; its full sequence is Alpha-ketoglutarate-dependent xanthine dioxygenase xan-1 (420 aa).

Residues histidine 157 and aspartate 159 each coordinate Fe cation. 2 residues coordinate 2-oxoglutarate: threonine 206 and tryptophan 336. Histidine 351 is a Fe cation binding site. Arginine 366 contacts 2-oxoglutarate. Arginine 366 is a substrate binding site.

Belongs to the TfdA dioxygenase family. Fe(2+) serves as cofactor.

It is found in the cytoplasm. It localises to the cytosol. It catalyses the reaction xanthine + 2-oxoglutarate + O2 = urate + succinate + CO2. Alpha-ketoglutarate-dependent xanthine dioxygenase is a non-heme mononuclear Fe(2+) enzyme that decarboxylates alpha-ketoglutarate to succinate and CO(2) while hydroxylating xanthine to generate uric acid. Allows xanthine utilization as a nitrogen source. The protein is Alpha-ketoglutarate-dependent xanthine dioxygenase xan-1 of Neurospora crassa (strain ATCC 24698 / 74-OR23-1A / CBS 708.71 / DSM 1257 / FGSC 987).